We begin with the raw amino-acid sequence, 387 residues long: Phosphoglycerate kinase (387 aa).

Substrate-binding positions include 21-23, R36, 59-62, R113, and R146; these read DLN and HLGR. Residues K197, E314, and 340–343 each bind ATP; that span reads GGDT.

It belongs to the phosphoglycerate kinase family. As to quaternary structure, monomer.

It localises to the cytoplasm. It carries out the reaction (2R)-3-phosphoglycerate + ATP = (2R)-3-phospho-glyceroyl phosphate + ADP. It participates in carbohydrate degradation; glycolysis; pyruvate from D-glyceraldehyde 3-phosphate: step 2/5. The sequence is that of Phosphoglycerate kinase from Pseudomonas entomophila (strain L48).